Consider the following 200-residue polypeptide: Dephospho-CoA kinase (200 aa).

The DPCK domain occupies 3–200 (IIGLTGGIGS…LWQRFATQVE (198 aa)). 11–16 (GSGKST) provides a ligand contact to ATP.

Belongs to the CoaE family.

Its subcellular location is the cytoplasm. It catalyses the reaction 3'-dephospho-CoA + ATP = ADP + CoA + H(+). It functions in the pathway cofactor biosynthesis; coenzyme A biosynthesis; CoA from (R)-pantothenate: step 5/5. In terms of biological role, catalyzes the phosphorylation of the 3'-hydroxyl group of dephosphocoenzyme A to form coenzyme A. The sequence is that of Dephospho-CoA kinase from Corynebacterium diphtheriae (strain ATCC 700971 / NCTC 13129 / Biotype gravis).